A 200-amino-acid chain; its full sequence is ATP-dependent Clp protease proteolytic subunit (200 aa).

Ser-103 functions as the Nucleophile in the catalytic mechanism. His-128 is an active-site residue.

The protein belongs to the peptidase S14 family. In terms of assembly, fourteen ClpP subunits assemble into 2 heptameric rings which stack back to back to give a disk-like structure with a central cavity, resembling the structure of eukaryotic proteasomes.

Its subcellular location is the cytoplasm. The enzyme catalyses Hydrolysis of proteins to small peptides in the presence of ATP and magnesium. alpha-casein is the usual test substrate. In the absence of ATP, only oligopeptides shorter than five residues are hydrolyzed (such as succinyl-Leu-Tyr-|-NHMec, and Leu-Tyr-Leu-|-Tyr-Trp, in which cleavage of the -Tyr-|-Leu- and -Tyr-|-Trp bonds also occurs).. Its function is as follows. Cleaves peptides in various proteins in a process that requires ATP hydrolysis. Has a chymotrypsin-like activity. Plays a major role in the degradation of misfolded proteins. In Vibrio parahaemolyticus serotype O3:K6 (strain RIMD 2210633), this protein is ATP-dependent Clp protease proteolytic subunit.